The chain runs to 1503 residues: Translocase of chloroplast 159, chloroplastic (1503 aa).

Polar residues predominate over residues 1-24 (MDSKSVTPEPTNPFYASSGQSGKT). The disordered stretch occupies residues 1 to 210 (MDSKSVTPEP…GGKVDVDDKS (210 aa)). Residues 21–37 (SGKTYASVVAAAAAAAA) form a helical membrane-spanning segment. Ser71 is modified (phosphoserine). Basic and acidic residues-rich tracts occupy residues 85–98 (KVSD…KEDS) and 176–210 (SESK…DDKS). Ser210, Ser281, and Ser288 each carry phosphoserine. Disordered regions lie at residues 298-338 (KFTS…DVEK) and 429-464 (VHNK…SEGD). Residues 447–456 (ESDKATEEGG) are compositionally biased toward basic and acidic residues. Phosphoserine is present on residues Ser448, Ser461, Ser589, Ser609, Ser630, Ser632, and Ser665. The interval 610-633 (FGGKEVDQEPSGEGVTRVDGSESE) is disordered. The stretch at 781-804 (EEEKQKLEKLQSLRVKFLRLLQRL) forms a coiled coil. One can recognise an AIG1-type G domain in the interval 853–1087 (IFSLNILVLG…RPQEPLDHRK (235 aa)). The G1 stretch occupies residues 862 to 869 (GKAGVGKS). GTP-binding positions include 865–870 (GVGKSA) and 884–889 (DAFGLS). Residue Ser869 coordinates Mg(2+). The interval 884-887 (DAFG) is homodimerization. The G2 stretch occupies residues 889–893 (STTSV). The interval 909–912 (DTPG) is G3. Residues 947 to 952 (RLDTQT) form a homodimerization region. The interval 981 to 984 (THAA) is G4. Residues His982 and 1035–1036 (EN) each bind GTP. Positions 1035–1037 (ENH) are G5. Positions 1175–1203 (DYRVKLLQKKQWREELKRMKEMKKNGKKL) form a coiled coil. A disordered region spans residues 1203-1222 (LGESEFGYPGEEDDPENGAP).

The protein belongs to the TRAFAC class TrmE-Era-EngA-EngB-Septin-like GTPase superfamily. AIG1/Toc34/Toc159-like paraseptin GTPase family. TOC159 subfamily. Homodimer and heterodimer with TOC33. Part of the TOC core complex that includes 1 protein for the specific recognition of transit peptides surrounded by a ring composed of four proteins forming translocation channels, and four to five GTP-binding proteins providing energy. This core complex can interact with components of the TIC complex to form a larger import complex. Chloroplastic protein precursor such as prSS (precursor of the RuBisCO small subunit) interacts with these complexes. The TOC complex contains a specific subset of polar lipids such as digalactosyldiacylglyceride (DGDG), phosphatidylcholine (PC) and phosphatidylglycerol (PG). Interacts with SP1. Mg(2+) serves as cofactor. Phosphorylated by KOC1.

It localises to the plastid. The protein resides in the chloroplast outer membrane. The protein localises to the cytoplasm. Functionally, GTPase involved in protein precursor import into chloroplasts. Seems to recognize chloroplast-destined precursor proteins and regulate their presentation to the translocation channel through GTP hydrolysis. Required for chloroplast biogenesis. Probably specialized in the import of nuclear encoded photosynthetic preproteins from the cytoplasm to the chloroplast. This Arabidopsis thaliana (Mouse-ear cress) protein is Translocase of chloroplast 159, chloroplastic.